A 2561-amino-acid polypeptide reads, in one-letter code: Plipastatin synthase subunit A (2561 aa).

Positions 1 to 1038 (MSEHTYSLTH…ATVIREGTDS (1038 aa)) are domain 1 (glutamate-activating). The tract at residues 2–300 (SEHTYSLTHA…SSLPIRITVD (299 aa)) is condensation 1. Residues 485–888 (TYAELDMYAS…SIEGVREAAV (404 aa)) are adenylation 1. Residues 961-1036 (APRNVTEMKL…GLATVIREGT (76 aa)) form the Carrier 1 domain. An O-(pantetheine 4'-phosphoryl)serine modification is found at Ser996. The segment at 1048 to 1338 (KQETYPVSSA…NTLALRTRPE (291 aa)) is condensation 2. The segment at 1048 to 2554 (KQETYPVSSA…ELTLSALSSI (1507 aa)) is domain 2 (D-ornithine-activating). The tract at residues 1525–1932 (SYRLLNERAN…QTGLVREAAV (408 aa)) is adenylation 2. In terms of domain architecture, Carrier 2 spans 2007-2081 (APVNDLQKTM…ELCGHITPLA (75 aa)). Ser2042 is subject to O-(pantetheine 4'-phosphoryl)serine. The interval 2089 to 2554 (AEGEAELTPI…ELTLSALSSI (466 aa)) is epimerization.

Belongs to the ATP-dependent AMP-binding enzyme family. Pantetheine 4'-phosphate serves as cofactor.

Functionally, this protein is a multifunctional enzyme, able to activate and polymerize the amino acids Glu and Orn as part of the biosynthesis of the lipopeptide antibiotic lipastatin. The Orn residue is further epimerized to the D-isomer form. The activation sites for these amino acids consist of individual domains. This is Plipastatin synthase subunit A (ppsA) from Bacillus subtilis (strain 168).